The primary structure comprises 349 residues: Selenide, water dikinase (349 aa).

Sec-19 is an active-site residue. Residue Sec-19 is a non-standard amino acid, selenocysteine. ATP contacts are provided by residues Lys-22 and 50–52 (LGD). Residue Asp-53 participates in Mg(2+) binding. ATP is bound by residues Asp-69, Asp-92, and 140-142 (GHT). Position 92 (Asp-92) interacts with Mg(2+). Residue Asp-246 coordinates Mg(2+).

Belongs to the selenophosphate synthase 1 family. Class I subfamily. As to quaternary structure, homodimer. The cofactor is Mg(2+).

It catalyses the reaction hydrogenselenide + ATP + H2O = selenophosphate + AMP + phosphate + 2 H(+). Its function is as follows. Synthesizes selenophosphate from selenide and ATP. The chain is Selenide, water dikinase from Methanocaldococcus jannaschii (strain ATCC 43067 / DSM 2661 / JAL-1 / JCM 10045 / NBRC 100440) (Methanococcus jannaschii).